A 436-amino-acid chain; its full sequence is Glutamyl-tRNA reductase (436 aa).

Substrate-binding positions include 49–52 (TCNR), S109, 114–116 (EGQ), and Q120. Catalysis depends on C50, which acts as the Nucleophile. 198 to 203 (GAGRMS) contacts NADP(+).

This sequence belongs to the glutamyl-tRNA reductase family. Homodimer.

The enzyme catalyses (S)-4-amino-5-oxopentanoate + tRNA(Glu) + NADP(+) = L-glutamyl-tRNA(Glu) + NADPH + H(+). Its pathway is porphyrin-containing compound metabolism; protoporphyrin-IX biosynthesis; 5-aminolevulinate from L-glutamyl-tRNA(Glu): step 1/2. It functions in the pathway porphyrin-containing compound metabolism; chlorophyll biosynthesis. Catalyzes the NADPH-dependent reduction of glutamyl-tRNA(Glu) to glutamate 1-semialdehyde (GSA). The sequence is that of Glutamyl-tRNA reductase from Prochlorococcus marinus (strain MIT 9313).